A 308-amino-acid chain; its full sequence is Tetraacyldisaccharide 4'-kinase (308 aa).

63 to 70 (SFGGNGKT) contacts ATP.

It belongs to the LpxK family.

The enzyme catalyses a lipid A disaccharide + ATP = a lipid IVA + ADP + H(+). It functions in the pathway glycolipid biosynthesis; lipid IV(A) biosynthesis; lipid IV(A) from (3R)-3-hydroxytetradecanoyl-[acyl-carrier-protein] and UDP-N-acetyl-alpha-D-glucosamine: step 6/6. In terms of biological role, transfers the gamma-phosphate of ATP to the 4'-position of a tetraacyldisaccharide 1-phosphate intermediate (termed DS-1-P) to form tetraacyldisaccharide 1,4'-bis-phosphate (lipid IVA). The chain is Tetraacyldisaccharide 4'-kinase from Campylobacter jejuni (strain RM1221).